The chain runs to 117 residues: uncharacterized protein (117 aa).

This is an uncharacterized protein from Saccharomyces cerevisiae (strain ATCC 204508 / S288c) (Baker's yeast).